A 342-amino-acid polypeptide reads, in one-letter code: Endoplasmic reticulum junction formation protein lunapark-1 (342 aa).

Residues 1 to 39 lie on the Cytoplasmic side of the membrane; it reads MGNLFSRNKSPATELERVALSIDDLKKRLQTISSSNTNT. Residues 13–34 are a coiled coil; that stretch reads TELERVALSIDDLKKRLQTISS. A helical membrane pass occupies residues 40 to 60; sequence LYYYYMSIVVILSIAMAHTWL. The Lumenal portion of the chain corresponds to 61–68; it reads RFEDPQKT. A helical transmembrane segment spans residues 69–89; that stretch reads YVACALMLGAIGIVLAGRYVI. Residues 90–342 lie on the Cytoplasmic side of the membrane; sequence NGFFSWRTNR…ESKTMETEFH (253 aa). A coiled-coil region spans residues 102–136; the sequence is QKLENAISQKTTLLDLVKETLKFKEAKEILDRYEK. The tract at residues 161–191 is disordered; sequence ADSSMFATPKQEQKRVETPTAQGPNSAMNSM. Residues 179 to 191 are compositionally biased toward polar residues; that stretch reads PTAQGPNSAMNSM. The segment at 236-261 adopts a C4-type; plays a role in ER morphology zinc-finger fold; it reads CSICHTHNGMSTPAEYPYISFRCFEC. The disordered stretch occupies residues 278-342; sequence RPPMGPKGIQ…ESKTMETEFH (65 aa). Residues 295–321 are compositionally biased toward polar residues; sequence SENTHNMMENQKPSTDLTPSASQNGSE. The segment covering 322–342 has biased composition (basic and acidic residues); that stretch reads KGSDSENEKVPESKTMETEFH.

The protein belongs to the lunapark family. Expressed in cell bodies along the ventral cord around the pharynx and the tail both in larvae and adults. Also expressed in muscles and hypodermal cells.

It localises to the endoplasmic reticulum membrane. Functionally, plays a role in tubular endoplasmic reticulum network formation and maintenance. May be involved in central nervous system development. Has a presynaptic role in neurotransmission. Likely to operate in synaptogenesis by regulating vesicular transport or localization. Required for correct localization of rab-3 and snb-1. The polypeptide is Endoplasmic reticulum junction formation protein lunapark-1 (lnp-1) (Caenorhabditis elegans).